A 145-amino-acid polypeptide reads, in one-letter code: Superoxide dismutase [Mn/Fe] (145 aa).

Fe(3+)-binding residues include His-10 and His-64. Mn(2+) contacts are provided by His-10 and His-64.

The protein belongs to the iron/manganese superoxide dismutase family. Requires Mn(2+) as cofactor. The cofactor is Fe(3+).

The catalysed reaction is 2 superoxide + 2 H(+) = H2O2 + O2. Functionally, destroys superoxide anion radicals which are normally produced within the cells and which are toxic to biological systems. Catalyzes the dismutation of superoxide anion radicals into O2 and H2O2 by successive reduction and oxidation of the transition metal ion at the active site. In Streptococcus parasanguinis, this protein is Superoxide dismutase [Mn/Fe] (sodA).